We begin with the raw amino-acid sequence, 404 residues long: Argininosuccinate synthase (404 aa).

ATP contacts are provided by residues 12–20 and alanine 40; that span reads AYSGGLDTS. L-citrulline is bound by residues tyrosine 92 and serine 97. Glycine 122 contributes to the ATP binding site. 3 residues coordinate L-aspartate: threonine 124, asparagine 128, and aspartate 129. An L-citrulline-binding site is contributed by asparagine 128. L-citrulline is bound by residues arginine 132, serine 181, serine 190, glutamate 266, and tyrosine 278.

The protein belongs to the argininosuccinate synthase family. Type 1 subfamily. As to quaternary structure, homotetramer.

It localises to the cytoplasm. It carries out the reaction L-citrulline + L-aspartate + ATP = 2-(N(omega)-L-arginino)succinate + AMP + diphosphate + H(+). It functions in the pathway amino-acid biosynthesis; L-arginine biosynthesis; L-arginine from L-ornithine and carbamoyl phosphate: step 2/3. The polypeptide is Argininosuccinate synthase (Photorhabdus laumondii subsp. laumondii (strain DSM 15139 / CIP 105565 / TT01) (Photorhabdus luminescens subsp. laumondii)).